We begin with the raw amino-acid sequence, 348 residues long: Ileal sodium/bile acid cotransporter (348 aa).

The Extracellular segment spans residues 1–28 (MDNSSICNPNATICEGDSCIAPESNFNA). 2 N-linked (GlcNAc...) asparagine glycosylation sites follow: Asn-3 and Asn-10. A helical membrane pass occupies residues 29 to 49 (ILSVVMSTVLTILLALVMFSM). Topologically, residues 50–81 (GCNVELHKFLGHLRRPWGIVVGFLCQFGIMPL) are cytoplasmic. Residues 82 to 102 (TGFVLSVAFGILPVQAVVVLI) traverse the membrane as a helical segment. Topologically, residues 103–126 (QGCCPGGTASNILAYWVDGDMDLS) are extracellular. Residues 127-147 (VSMTTCSTLLALGMMPLCLFI) traverse the membrane as a helical segment. Over 148-157 (YTKMWVDSGT) the chain is Cytoplasmic. Residues 158–178 (IVIPYDSIGTSLVALVIPVSI) form a helical membrane-spanning segment. The Extracellular segment spans residues 179-195 (GMYVNHKWPQKAKIILK). The helical transmembrane segment at 196–216 (IGSIAGAILIVLIAVVGGILY) threads the bilayer. The Cytoplasmic portion of the chain corresponds to 217–224 (QSAWTIEP). A helical membrane pass occupies residues 225–245 (KLWIIGTIYPIAGYGLGFFLA). Over 246–284 (RIAGQPWYRCRTVALETGLQNTQLCSTIVQLSFSPEDLN) the chain is Extracellular. A helical transmembrane segment spans residues 285–305 (LVFTFPLIYSIFQIAFAAILL). Over 306–348 (GAYVAYKKCHGKNNTELQEKTDNEMEPRSSFQETNKGFQPDEK) the chain is Cytoplasmic. A compositionally biased stretch (basic and acidic residues) spans 322-332 (LQEKTDNEMEP). Positions 322–348 (LQEKTDNEMEPRSSFQETNKGFQPDEK) are disordered. Position 335 is a phosphoserine (Ser-335).

Belongs to the bile acid:sodium symporter (BASS) (TC 2.A.28) family. In terms of assembly, monomer and homodimer. In terms of tissue distribution, mainly expressed in ileum and kidney, lower expression in jejunum.

Its subcellular location is the membrane. The enzyme catalyses taurocholate(out) + 2 Na(+)(out) = taurocholate(in) + 2 Na(+)(in). The catalysed reaction is cholate(out) + 2 Na(+)(out) = cholate(in) + 2 Na(+)(in). It catalyses the reaction taurochenodeoxycholate(out) + 2 Na(+)(out) = taurochenodeoxycholate(in) + 2 Na(+)(in). It carries out the reaction tauroursodeoxycholate(out) + 2 Na(+)(out) = tauroursodeoxycholate(in) + 2 Na(+)(in). The enzyme catalyses glycocholate(out) + 2 Na(+)(out) = glycocholate(in) + 2 Na(+)(in). The catalysed reaction is tauronorcholate(out) + 2 Na(+)(out) = tauronorcholate(in) + 2 Na(+)(in). It catalyses the reaction tauroallocholate(out) + 2 Na(+)(out) = tauroallocholate(in) + 2 Na(+)(in). It carries out the reaction taurodeoxycholate(out) + 2 Na(+)(out) = taurodeoxycholate(in) + 2 Na(+)(in). The enzyme catalyses tauro-beta-muricholate(out) + 2 Na(+)(out) = tauro-beta-muricholate(in) + 2 Na(+)(in). Plays a critical role in the sodium-dependent reabsorption of bile acids from the lumen of the small intestine. Transports various bile acids, unconjugated or conjugated, such as cholate and taurocholate. Also responsible for bile acid transport in the renal proximal tubules, a salvage mechanism that helps conserve bile acids. Works collaboratively with the Na(+)-taurocholate cotransporting polypeptide (NTCP), the organic solute transporter (OST), and the bile salt export pump (BSEP), to ensure efficacious biological recycling of bile acids during enterohepatic circulation. The chain is Ileal sodium/bile acid cotransporter (SLC10A2) from Cricetulus griseus (Chinese hamster).